The following is a 227-amino-acid chain: Phosphoribosylformylglycinamidine synthase subunit PurQ (227 aa).

Positions 3–225 (FAVIVFPGSN…LKQWRETYVV (223 aa)) constitute a Glutamine amidotransferase type-1 domain. Residue Cys-86 is the Nucleophile of the active site. Residues His-194 and Glu-196 contribute to the active site.

Part of the FGAM synthase complex composed of 1 PurL, 1 PurQ and 2 PurS subunits.

The protein resides in the cytoplasm. The enzyme catalyses N(2)-formyl-N(1)-(5-phospho-beta-D-ribosyl)glycinamide + L-glutamine + ATP + H2O = 2-formamido-N(1)-(5-O-phospho-beta-D-ribosyl)acetamidine + L-glutamate + ADP + phosphate + H(+). The catalysed reaction is L-glutamine + H2O = L-glutamate + NH4(+). The protein operates within purine metabolism; IMP biosynthesis via de novo pathway; 5-amino-1-(5-phospho-D-ribosyl)imidazole from N(2)-formyl-N(1)-(5-phospho-D-ribosyl)glycinamide: step 1/2. Functionally, part of the phosphoribosylformylglycinamidine synthase complex involved in the purines biosynthetic pathway. Catalyzes the ATP-dependent conversion of formylglycinamide ribonucleotide (FGAR) and glutamine to yield formylglycinamidine ribonucleotide (FGAM) and glutamate. The FGAM synthase complex is composed of three subunits. PurQ produces an ammonia molecule by converting glutamine to glutamate. PurL transfers the ammonia molecule to FGAR to form FGAM in an ATP-dependent manner. PurS interacts with PurQ and PurL and is thought to assist in the transfer of the ammonia molecule from PurQ to PurL. The polypeptide is Phosphoribosylformylglycinamidine synthase subunit PurQ (Bacillus cereus (strain Q1)).